A 27-amino-acid chain; its full sequence is Fructokinase (27 aa).

This sequence belongs to the ROK (NagC/XylR) family. In terms of assembly, homodimer. Mg(2+) serves as cofactor.

The enzyme catalyses D-fructose + ATP = D-fructose 6-phosphate + ADP + H(+). With respect to regulation, inhibition by zinc ions. The sequence is that of Fructokinase from Fusobacterium mortiferum.